A 731-amino-acid chain; its full sequence is Wall-associated receptor kinase-like 5 (731 aa).

The N-terminal stretch at 1-26 (MKTKTYRFVCLVASVLTLQLMNGSSA) is a signal peptide. Over 27–360 (ATPPPPPNSK…PAKPLVLQGV (334 aa)) the chain is Extracellular. Asparagine 37, asparagine 43, asparagine 73, asparagine 96, asparagine 124, asparagine 137, asparagine 236, and asparagine 272 each carry an N-linked (GlcNAc...) asparagine glycan. Residues 285-342 (CLCEYGYFSEMSYRNCYCSLGFTGNPYLRGGCIDNDDCKGPNICEEGTCVNVPGGYRC) form an atypical EGF-like region. 3 disulfide bridges follow: cysteine 287/cysteine 300, cysteine 322/cysteine 333, and cysteine 328/cysteine 342. The helical transmembrane segment at 361–381 (LLGLMGLLFLVVGTLGLIIFI) threads the bilayer. The Cytoplasmic segment spans residues 382–731 (KKRRRIISSR…EDQVMEISRE (350 aa)). A Protein kinase domain is found at 432-705 (FSVKRVLGKG…REASLELERI (274 aa)). ATP contacts are provided by residues 438–446 (LGKGSQGTV) and lysine 460. The residue at position 505 (tyrosine 505) is a Phosphotyrosine. Aspartate 557 acts as the Proton acceptor in catalysis. Residues threonine 591 and threonine 596 each carry the phosphothreonine modification. Tyrosine 604 is modified (phosphotyrosine). The disordered stretch occupies residues 709 to 731 (PEDLEAHIENDDEEDQVMEISRE).

This sequence belongs to the protein kinase superfamily. Ser/Thr protein kinase family. Preferentially expressed in roots and flowers.

It is found in the membrane. It catalyses the reaction L-seryl-[protein] + ATP = O-phospho-L-seryl-[protein] + ADP + H(+). The enzyme catalyses L-threonyl-[protein] + ATP = O-phospho-L-threonyl-[protein] + ADP + H(+). Functionally, serine/threonine-protein kinase that may function as a signaling receptor of extracellular matrix component. May be involved in plant's response to pathogen infection. The sequence is that of Wall-associated receptor kinase-like 5 (WAKL5) from Arabidopsis thaliana (Mouse-ear cress).